Consider the following 40-residue polypeptide: Putative NAD(P)-dependent glyceraldehyde-3-phosphate dehydrogenase PS5 (40 aa).

This Pinus strobus (Eastern white pine) protein is Putative NAD(P)-dependent glyceraldehyde-3-phosphate dehydrogenase PS5.